A 323-amino-acid polypeptide reads, in one-letter code: uncharacterized protein (323 aa).

The TIR domain occupies 1–142 (MPSVFFSYSH…QVAKAVREAA (142 aa)).

This is an uncharacterized protein from Sinorhizobium fredii (strain NBRC 101917 / NGR234).